Consider the following 469-residue polypeptide: Probable Xaa-Pro aminopeptidase PEPP (469 aa).

Mn(2+) contacts are provided by D264, D275, E398, and E438.

The protein belongs to the peptidase M24B family. The cofactor is Mn(2+).

The enzyme catalyses Release of any N-terminal amino acid, including proline, that is linked to proline, even from a dipeptide or tripeptide.. Its function is as follows. Catalyzes the removal of a penultimate prolyl residue from the N-termini of peptides. In Ajellomyces capsulatus (strain H143) (Darling's disease fungus), this protein is Probable Xaa-Pro aminopeptidase PEPP (PEPP).